The sequence spans 141 residues: Nucleoside diphosphate kinase (141 aa).

ATP-binding residues include K11, F59, R87, T93, R104, and N114. The Pros-phosphohistidine intermediate role is filled by H117.

This sequence belongs to the NDK family. As to quaternary structure, homotetramer. The cofactor is Mg(2+).

It localises to the cytoplasm. It catalyses the reaction a 2'-deoxyribonucleoside 5'-diphosphate + ATP = a 2'-deoxyribonucleoside 5'-triphosphate + ADP. The enzyme catalyses a ribonucleoside 5'-diphosphate + ATP = a ribonucleoside 5'-triphosphate + ADP. Major role in the synthesis of nucleoside triphosphates other than ATP. The ATP gamma phosphate is transferred to the NDP beta phosphate via a ping-pong mechanism, using a phosphorylated active-site intermediate. This Janthinobacterium sp. (strain Marseille) (Minibacterium massiliensis) protein is Nucleoside diphosphate kinase.